A 705-amino-acid chain; its full sequence is Probable E3 ubiquitin-protein ligase MID2 (705 aa).

An RING-type zinc finger spans residues 30–80; that stretch reads CPICLELFEDPLLLPCAHSLCFSCAHRILVSSCSSGESIEPITAFQCPTCR. The B box-type 1; degenerate zinc finger occupies 137–184; sequence IACQFCEQDPPRDAVKTCITCEVSYCDRCLRATHPNKKPFTSHRLVEP. The B box-type 2 zinc-finger motif lies at 190–232; that stretch reads LRGITCLDHENEKVNMYCVSDDQLICALCKLVGRHRDHQVASL. Zn(2+) is bound by residues C195, H198, C218, and H224. Residues 233 to 301 are a coiled coil; the sequence is NDRFEKLKQT…IIQQRKQMIA (69 aa). One can recognise a COS domain in the interval 340–399; the sequence is LKENDQARFLQSAKNIAERVAMATASSQVLIPDINFNDAFENFALDFSREKKLLEGLDYL. A Fibronectin type-III domain is found at 404–504; sequence PPSIREELCT…EPTRLKTNSQ (101 aa). The 194-residue stretch at 486-679 folds into the B30.2/SPRY domain; that stretch reads INQAGSRNSE…ILSGLPAPDF (194 aa).

The protein belongs to the TRIM/RBCC family. As to quaternary structure, homodimer or heterodimer with MID1. Interacts with IGBP1. Phosphorylated on serine and threonine residues. Low abundance in brain and lung, with even lower levels in heart, liver, and kidney.

The protein localises to the cytoplasm. Its subcellular location is the cytoskeleton. It catalyses the reaction S-ubiquitinyl-[E2 ubiquitin-conjugating enzyme]-L-cysteine + [acceptor protein]-L-lysine = [E2 ubiquitin-conjugating enzyme]-L-cysteine + N(6)-ubiquitinyl-[acceptor protein]-L-lysine.. It functions in the pathway protein modification; protein ubiquitination. E3 ubiquitin ligase that plays a role in microtubule stabilization. Mediates the 'Lys-48'-linked polyubiquitination of LRRK2 to drive its localization to microtubules and its proteasomal degradation in neurons. This ubiquitination inhibits LRRK2 kinase activation by RAB29. The chain is Probable E3 ubiquitin-protein ligase MID2 (Mid2) from Mus musculus (Mouse).